A 1727-amino-acid chain; its full sequence is Nucleoporin alm1 (1727 aa).

Coiled coils occupy residues 57-361 (QEVN…KNTS), 443-463 (NFLS…QAEL), 542-740 (IKEA…AEEL), 804-1106 (AARK…INES), 1223-1427 (GERS…QLNK), 1497-1555 (NEEE…AESA), and 1601-1664 (QKEW…KKDS). Positions 1423-1448 (EQLNKPSATPTATTQSEPSTVSLEEF) are enriched in polar residues. Disordered regions lie at residues 1423–1459 (EQLN…SSTQ), 1477–1500 (EKVR…NEEE), and 1656–1727 (LEQS…KKAK). Polar residues-rich tracts occupy residues 1672-1684 (ASKN…SNSE) and 1702-1714 (VDTN…SSSD). The residue at position 1706 (Ser-1706) is a Phosphoserine.

It is found in the nucleus. Its subcellular location is the nuclear pore complex. The protein resides in the nucleus envelope. Its function is as follows. Maintains the proteasome and its anchor cut8 at the nucleus envelope and is required for kinetochore component proteostasis. Proper kinetochore stoichiometry ensures the correct attachment of kinetochores to spindle microtubules during cytokinesis. Required for the localization of spindle assembly checkpoint (SAC) protein mad2 and bub1 to the nucleus envelope during interphase, but not their localization during mitosis. The polypeptide is Nucleoporin alm1 (Schizosaccharomyces pombe (strain 972 / ATCC 24843) (Fission yeast)).